Consider the following 410-residue polypeptide: E3 ubiquitin-protein ligase ICP0 (410 aa).

An RING-type zinc finger spans residues 46 to 85 (CPICLDVAATEAQTLPCMHKFCLDCIQRWTLTSTACPLCN). A disordered region spans residues 243–410 (TSESEAHSDS…IFIDLTQDDD (168 aa)). The segment covering 287–315 (APRRSPRRARRAAVLRREQRRTRCLRRGR) has biased composition (basic residues). Low complexity-rich tracts occupy residues 329 to 340 (SSGEGSSAQHGA) and 348 to 399 (GSAN…PRSA).

Auto-ubiquitinated.

The enzyme catalyses S-ubiquitinyl-[E2 ubiquitin-conjugating enzyme]-L-cysteine + [acceptor protein]-L-lysine = [E2 ubiquitin-conjugating enzyme]-L-cysteine + N(6)-ubiquitinyl-[acceptor protein]-L-lysine.. In terms of biological role, evades nuclear antiviral defenses triggered by dsDNA viruses. Acts during the initial stages of lytic infection and the reactivation of latent viral genome. Prevents the antiviral effect of nuclear bodies by degrading host PML and SP100. In Sus scrofa (Pig), this protein is E3 ubiquitin-protein ligase ICP0 (EP0).